The primary structure comprises 255 residues: Pimeloyl-[acyl-carrier protein] methyl ester esterase (255 aa).

One can recognise an AB hydrolase-1 domain in the interval 16 to 242 (LVLLHGWGMN…SSHAPFITEP (227 aa)). Substrate is bound by residues tryptophan 22, 82–83 (SL), and 143–147 (FMALQ). The active-site Nucleophile is the serine 82. Residues aspartate 207 and histidine 235 contribute to the active site. Substrate is bound at residue histidine 235.

It belongs to the AB hydrolase superfamily. Carboxylesterase BioH family. In terms of assembly, monomer.

Its subcellular location is the cytoplasm. The catalysed reaction is 6-carboxyhexanoyl-[ACP] methyl ester + H2O = 6-carboxyhexanoyl-[ACP] + methanol + H(+). It functions in the pathway cofactor biosynthesis; biotin biosynthesis. In terms of biological role, the physiological role of BioH is to remove the methyl group introduced by BioC when the pimeloyl moiety is complete. It allows to synthesize pimeloyl-ACP via the fatty acid synthetic pathway through the hydrolysis of the ester bonds of pimeloyl-ACP esters. The polypeptide is Pimeloyl-[acyl-carrier protein] methyl ester esterase (Vibrio vulnificus (strain YJ016)).